The primary structure comprises 741 residues: Ethylene receptor 2 (741 aa).

The next 3 helical transmembrane spans lie at 23–43 (ISDF…IYFV), 53–73 (WVLV…LINL), and 92–112 (IMTA…IPDL). Cu cation-binding residues include cysteine 65 and histidine 69. The GAF domain occupies 158-307 (DRHTILKTTL…VVADQVAVAL (150 aa)). The 240-residue stretch at 350–589 (VMNHEMRTPM…TFVVKLGIPE (240 aa)) folds into the Histidine kinase domain. A Phosphohistidine; by autocatalysis modification is found at histidine 353. Positions 615–732 (KVLLLDDNGV…KMRNVLSNLL (118 aa)) constitute a Response regulatory domain. Aspartate 663 carries the post-translational modification 4-aspartylphosphate.

This sequence belongs to the ethylene receptor family. As to quaternary structure, homodimer; disulfide-linked. Cu cation is required as a cofactor. Post-translationally, activation probably requires a transfer of a phosphate group between a His in the transmitter domain and an Asp of the receiver domain.

Its subcellular location is the endoplasmic reticulum membrane. It carries out the reaction ATP + protein L-histidine = ADP + protein N-phospho-L-histidine.. In terms of biological role, may act early in the ethylene signal transduction pathway, possibly as an ethylene receptor, or as a regulator of the pathway. The chain is Ethylene receptor 2 (ETR2) from Pelargonium hortorum (Common geranium).